A 669-amino-acid chain; its full sequence is Histone-lysine N-methyltransferase, H3 lysine-9 specific SUVH3 (669 aa).

Disordered stretches follow at residues 56 to 127 (YSSF…EKKT) and 270 to 290 (ESLIYSGQGGNADKNRQASDQ). 2 stretches are compositionally biased toward polar residues: residues 65–82 (QQPTHDTPDLNQTQNTPI) and 93–107 (RTPTKTNGPSSSSGT). Residues 108 to 120 (KRGVGRPKGTTSV) constitute a DNA-binding region (a.T hook). In terms of domain architecture, YDG spans 208–355 (GTVPGIEVGD…CNTFKYKLVR (148 aa)). A Pre-SET domain is found at 430–491 (IGCSCSGSCS…SCKNRVIQTG (62 aa)). Residues Cys432, Cys434, Cys438, Cys445, Cys447, Cys473, Cys477, Cys479, and Cys483 each coordinate Zn(2+). Residues 494-638 (SRLEVFKTRN…PMAELTYDYG (145 aa)) enclose the SET domain. S-adenosyl-L-methionine contacts are provided by residues 504 to 506 (RGW), Asp540, Tyr542, Arg592, and 595 to 596 (NH). Zn(2+) is bound by residues Cys598, Cys657, Cys659, and Cys664. A Post-SET domain is found at 653–669 (GQRTCLCGSEQCRGSFG).

It belongs to the class V-like SAM-binding methyltransferase superfamily. Histone-lysine methyltransferase family. Suvar3-9 subfamily. Expressed in leaves stems and flowers.

It is found in the nucleus. Its subcellular location is the chromosome. It localises to the centromere. The catalysed reaction is L-lysyl(9)-[histone H3] + S-adenosyl-L-methionine = N(6)-methyl-L-lysyl(9)-[histone H3] + S-adenosyl-L-homocysteine + H(+). Histone methyltransferase. Methylates 'Lys-9' of histone H3. H3 'Lys-9' methylation represents a specific tag for epigenetic transcriptional repression. This Arabidopsis thaliana (Mouse-ear cress) protein is Histone-lysine N-methyltransferase, H3 lysine-9 specific SUVH3 (SUVH3).